We begin with the raw amino-acid sequence, 356 residues long: Tyrosine recombinase XerS (356 aa).

In terms of domain architecture, Core-binding (CB) spans 16–121 (IMPWYVLDYY…ALSSLYKYLT (106 aa)). Residues 169–354 (AFLDYVDKEY…VNDEQKNALD (186 aa)) form the Tyr recombinase domain. Active-site residues include arginine 210, lysine 234, histidine 306, arginine 309, and histidine 332. The active-site O-(3'-phospho-DNA)-tyrosine intermediate is tyrosine 341.

It belongs to the 'phage' integrase family. XerS subfamily.

It is found in the cytoplasm. Its activity is regulated as follows. FtsK is required for recombination. Its function is as follows. Site-specific tyrosine recombinase, which acts by catalyzing the cutting and rejoining of the recombining DNA molecules. Essential to convert dimers of the bacterial chromosome into monomers to permit their segregation at cell division. The polypeptide is Tyrosine recombinase XerS (Streptococcus pyogenes serotype M18 (strain MGAS8232)).